Here is a 388-residue protein sequence, read N- to C-terminus: Processive diacylglycerol beta-glucosyltransferase (388 aa).

This sequence belongs to the glycosyltransferase 28 family. UgtP subfamily.

The protein localises to the cell membrane. The enzyme catalyses a 1,2-diacyl-3-O-(beta-D-glucopyranosyl)-sn-glycerol + UDP-alpha-D-glucose = a 1,2-diacyl-3-O-(beta-D-Glc-(1-&gt;6)-beta-D-Glc)-sn-glycerol + UDP + H(+). It carries out the reaction a 1,2-diacyl-3-O-(beta-D-Glc-(1-&gt;6)-beta-D-Glc)-sn-glycerol + UDP-alpha-D-glucose = a 1,2-diacyl-3-O-(beta-D-Glc-(1-&gt;6)-beta-D-Glc-(1-&gt;6)-beta-D-Glc)-sn-glycerol + UDP + H(+). The catalysed reaction is a 1,2-diacyl-sn-glycerol + UDP-alpha-D-glucose = a 1,2-diacyl-3-O-(beta-D-glucopyranosyl)-sn-glycerol + UDP + H(+). Its pathway is glycolipid metabolism; diglucosyl-diacylglycerol biosynthesis. Functionally, processive glucosyltransferase involved in the biosynthesis of both the bilayer- and non-bilayer-forming membrane glucolipids. Is able to successively transfer up to three glucosyl residues to diacylglycerol (DAG), thereby catalyzing the formation of beta-monoglucosyl-DAG (3-O-(beta-D-glucopyranosyl)-1,2-diacyl-sn-glycerol), beta-diglucosyl-DAG (3-O-(beta-D-glucopyranosyl-beta-(1-&gt;6)-D-glucopyranosyl)-1,2-diacyl-sn-glycerol) and beta-triglucosyl-DAG (3-O-(beta-D-glucopyranosyl-beta-(1-&gt;6)-D-glucopyranosyl-beta-(1-&gt;6)-D-glucopyranosyl)-1,2-diacyl-sn-glycerol). Beta-diglucosyl-DAG is the predominant glycolipid found in Bacillales and is also used as a membrane anchor for lipoteichoic acid (LTA). This chain is Processive diacylglycerol beta-glucosyltransferase, found in Bacillus mycoides (strain KBAB4) (Bacillus weihenstephanensis).